Here is a 164-residue protein sequence, read N- to C-terminus: SsrA-binding protein (164 aa).

Belongs to the SmpB family.

It localises to the cytoplasm. Required for rescue of stalled ribosomes mediated by trans-translation. Binds to transfer-messenger RNA (tmRNA), required for stable association of tmRNA with ribosomes. tmRNA and SmpB together mimic tRNA shape, replacing the anticodon stem-loop with SmpB. tmRNA is encoded by the ssrA gene; the 2 termini fold to resemble tRNA(Ala) and it encodes a 'tag peptide', a short internal open reading frame. During trans-translation Ala-aminoacylated tmRNA acts like a tRNA, entering the A-site of stalled ribosomes, displacing the stalled mRNA. The ribosome then switches to translate the ORF on the tmRNA; the nascent peptide is terminated with the 'tag peptide' encoded by the tmRNA and targeted for degradation. The ribosome is freed to recommence translation, which seems to be the essential function of trans-translation. This Corynebacterium glutamicum (strain R) protein is SsrA-binding protein.